A 694-amino-acid polypeptide reads, in one-letter code: Type VI secretion system spike protein VgrG2 (694 aa).

It belongs to the VgrG protein family.

Its subcellular location is the secreted. Its function is as follows. Part of the type VI secretion system specialized secretion system, which delivers several virulence factors in both prokaryotic and eukaryotic cells during infection. Forms the spike at the tip of the elongating tube formed by haemolysin co-regulated protein Hcp. Allows the delivery of the VasX antibacterial toxin to target cells where it exerts its toxicity. In Vibrio cholerae serotype O1 (strain ATCC 39315 / El Tor Inaba N16961), this protein is Type VI secretion system spike protein VgrG2 (vgrG2).